The following is a 32-amino-acid chain: MSDIN-like toxin proprotein 2 (32 aa).

Residues 1–10 constitute a propeptide that is removed on maturation; it reads MSDINATRLP. The cyclopeptide (His-Pro) cross-link spans 11–17; sequence HLVRYPP. A propeptide spanning residues 18–32 is cleaved from the precursor; it reads YVGDGTDLTLNRGEK.

The protein belongs to the MSDIN fungal toxin family. Post-translationally, processed by the macrocyclase-peptidase enzyme POPB to yield a toxic cyclic heptapeptide. POPB first removes 10 residues from the N-terminus. Conformational trapping of the remaining peptide forces the enzyme to release this intermediate rather than proceed to macrocyclization. The enzyme rebinds the remaining peptide in a different conformation and catalyzes macrocyclization of the N-terminal 7 residues.

In terms of biological role, probable toxin that belongs to the MSDIN-like toxin family responsible for a large number of food poisoning cases and deaths. The chain is MSDIN-like toxin proprotein 2 from Amanita fuligineoides.